The primary structure comprises 215 residues: Protein-L-isoaspartate O-methyltransferase (215 aa).

Serine 62 is a catalytic residue.

This sequence belongs to the methyltransferase superfamily. L-isoaspartyl/D-aspartyl protein methyltransferase family.

It localises to the cytoplasm. The catalysed reaction is [protein]-L-isoaspartate + S-adenosyl-L-methionine = [protein]-L-isoaspartate alpha-methyl ester + S-adenosyl-L-homocysteine. Functionally, catalyzes the methyl esterification of L-isoaspartyl residues in peptides and proteins that result from spontaneous decomposition of normal L-aspartyl and L-asparaginyl residues. It plays a role in the repair and/or degradation of damaged proteins. The chain is Protein-L-isoaspartate O-methyltransferase from Ruegeria pomeroyi (strain ATCC 700808 / DSM 15171 / DSS-3) (Silicibacter pomeroyi).